Reading from the N-terminus, the 452-residue chain is MVGRMLSSPEPTLSTMAMSAAHGEDSPYFAGWRAYDEDPYDPITNPQGVIQMGLAENQVSFDLLEEYMREHPEASDCGAGVRENALFQDYHGLKSFRKAMASFMETIRGGKARFDPDRVVLTAGATAANELLTFILADPGDALLVPTPYYPGFDRDLRWRTGVNIVPVSCDSAAGFQVTAGALRAAYDEAVAAGTRVRGVLITNPSNPLGTTAARGVLEGILDFVARHDMHLISDEIYSGSVFAAPDLVSVAELVDERRRARGGAADAEDIARRVHVVYSLSKDLGLPGFRVGVVYSYNDAVVAAARRMSSFTLVSSQTQRTLAAMLSDAAFAAAYVRSNRDRLRERHARAVAGLRRAGVACLRGANAGLFVWVDMRRLLGDGEATVAGELRLWRRVVAEAKLNISPGSSCHCREPGWFRVCFANMSLETLDVALHRLGCFIKKWEQEQHEN.

An N6-(pyridoxal phosphate)lysine modification is found at Lys283.

It belongs to the class-I pyridoxal-phosphate-dependent aminotransferase family. Pyridoxal 5'-phosphate serves as cofactor. In terms of tissue distribution, expressed in leaves. Expressed in roots and leaf blades. Expressed at low levels in leaf sheaths and shoot bases.

The enzyme catalyses S-adenosyl-L-methionine = 1-aminocyclopropane-1-carboxylate + S-methyl-5'-thioadenosine + H(+). Its pathway is alkene biosynthesis; ethylene biosynthesis via S-adenosyl-L-methionine; ethylene from S-adenosyl-L-methionine: step 1/2. In terms of biological role, catalyzes the formation of 1-aminocyclopropane-1-carboxylate, a direct precursor of ethylene in higher plants. The protein is 1-aminocyclopropane-1-carboxylate synthase 3 of Oryza sativa subsp. japonica (Rice).